The chain runs to 2189 residues: MTEVGPADRRKLLHSKRAEANSIVTSRKRKLRELYAVATDEDGFPNHDLNDLDTRPASPGEAKFLFDCEILQGRRLAERLLPVFQRPRFDTLQHIATADESSLGHGPHVVQQVQPSPLIHPNHTIPKNVQHNGLPSPAPPASSIRHEPERTVPYNQVPNGAAGPQEALKAFAPRQEFQKLAPVQGSAVKTADGPSGESKPPAKETPVLLAPAAPHGNGRWNGIINNAPQGRVLPTPQTVAPPATAPTSTTKTANLGEGRAGPKDDTVSRGDAEEKARPKPTITSVNQLLSNGDSIRYPDTLSSPSSTVQSAPTPLGNEASASTSPDNEASQSFDKPVSRPEQELRRATTDNKGVGQFTGPSVAVPELRPQPQQPGVYANGAPEVPISSAPSVRPAASGAEAQLLQESAATRTSQVIGKAGVAGPHGAHSTGGLQTQHPSAVNGEVRNMMNGDIPGKHVASQASVSTGVAVTKAALPEVAKQGPLPQGPESRNNRADVGPTPMDLDRIPTAQAPKPIPSVHAVQEKAPSQESARQPQPSSTAPSTTPPSAQPAVSLEKTVPGIQINAPPETETETQARTSQSSHPDTESAVADEEGDMPPGLLTHRLKSLSTRLRERRRKSVPTVVFGKQYRKPRFSDDTALIVNKPKPPGHIPSEDYFVTLFIESFARTSSWMKPLEKLLHSAHKTVSTSDQTLSILDHQACKILRRVYHLQQHDKWSLRQPVRCLEPARPASHQDLLIKEMKWMRTDFREERKWKRAVARNLAYACAEWYYSSPADRKLLQVDAKIPPVRAVDNADTSMADAPETGESLVPELDHSDSPVGNDEEVPELPITTIAPATIFALQDDEVVFELQPSRTADLLLENLPMYGSPLKVPKFDWIIPDYDPDAKWKRPAVPLSKYVEGEMVLDVKPQPQKRSRFQFQGEDEEEEEEYVFGAQPDKGAKLPPTSTDVALFAPEMKLTRDRLHAGHQFRPPSEHPMPVQSFFESRIASQWTLAEDDQLRALVREYSYNWSLISSMISSRSSFPSAVERRTPWECFERWVNLEGLPSDFAKTPYFKAYQARIDAAGRTILQHNQNAAQGQQVGPNGAVAPIPRKRPTNTMRVERRRNQKHLALFDAMRKLAKKREAAAQKQQAQATMTAMRKTNEQQRQQPQQQLHLQAKTPQEYSLMRAARDQQIAEKMAHLAARQHEIIQKRLLTQRQAQLAATPGVAQVPQTAAQLAAANSLNNAAARLNIPGQMAVTAQKLAPGRVPMQAPAGIPTVPAQLAASGLVPPLPVAAIPQAQLQAMQAQHRLPMVNPTPDINLVMQARRIQDQQRAVAVQLQQQQHQQHQHQQHPQQPQQQGQVQQQVVSQQQQQQHQPQQQQQPQQQQQLQQQQPQQQQPQHQQVQTPQPAQQQPQQPQVTQQPPPVPQVQINGVQGSPTPMRPVVNSLNNGVYMSSVSAQAMMASFNAANSVAGMVTSPGAGLSMPMLPAGSPRGPQIPAQQLPYTHIHTRLKEFETHFRNKNPGATQDQIRQMATEHLGRLIVQTQQHAMNAAAGGVGHSLGTVATTTSPHQYAQLLRAQQQAQAQQAQAQQQAPQPAQSQLTPAQLAQAQAAAAQKQKQAAAAAAQAKVLAQAQMQTQTPAHQPHQPQAQPHVQAQAMAAAQLQAQVQLQAQAAAQKQAAQAHPQAQSQGQGQPPQQTQRAHQVQQVQGQQAHQLPQGSQSQQIQQQVQQSPQARQQSQQPQMVRQPVQQAQQPQQLQQPQQSQKTPQMQPQQQVQTPHQQAQKAQQSQQAQLAQQQQHQQQQQQQQHGQAQSQGQIQGQGQAPGQGQAPGQGHAQGQVQGQVQGQVQGQVQGQVQGQVQGQVQGQAPGQVQPQHAQHSRHTPNSQHAQHTQQAQHARNAQQAHHTQQVQQAQHVQQPQGLQGQRHGQVHGNGQQLHQQHQHQQQQPQQAQQTQQQRQQVHPAPQLPQAQPPQHSHQAQAQHPQTQQAQAPQAQAQQPQPPQQAQAQQVQQPQQAKLTQQAQQAQQAQGQQAQGQQAQGQQAQSQQARAQQAQVQQAQVQQAQVQQAQAQQAQAQQAQAQQAQAQAQAQSHGQMQPQTQPQQQPQPQPQSQPQAHQPQQASQQVQHGLVGQQGQQNRQGQQGQQSHQVQQAQQPQVQQAQQPVATPQSASQTSQNSQPAQQAGMAQQQQGQGSGSAAPAPTK.

Disordered regions lie at residues 183–400, 415–438, and 477–601; these read VQGS…SGAE, VIGK…TQHP, and EVAK…PPGL. Positions 234–253 are enriched in low complexity; it reads PTPQTVAPPATAPTSTTKTA. Positions 260 to 277 are enriched in basic and acidic residues; the sequence is AGPKDDTVSRGDAEEKAR. Polar residues-rich tracts occupy residues 281–293, 300–312, and 319–333; these read TITS…SNGD, TLSS…QSAP, and ASAS…SQSF. Basic and acidic residues predominate over residues 336 to 349; the sequence is PVSRPEQELRRATT. Residues 534–543 are compositionally biased toward low complexity; it reads QPQPSSTAPS. Polar residues predominate over residues 573–583; that stretch reads ETQARTSQSSH. In terms of domain architecture, HSA spans 722-797; that stretch reads PVRCLEPARP…PPVRAVDNAD (76 aa). In terms of domain architecture, Myb-like spans 985 to 1045; sequence FESRIASQWT…ECFERWVNLE (61 aa). 2 stretches are compositionally biased toward low complexity: residues 1320 to 1330 and 1336 to 1406; these read VAVQLQQQQHQ and QHPQ…QVTQ. Disordered regions lie at residues 1320–1428, 1622–1644, 1663–1831, and 1846–2189; these read VAVQ…PMRP, MQTQ…QAQA, QKQA…GQVQ, and VQGQ…APTK. Low complexity-rich tracts occupy residues 1663-1808, 1818-1831, 1846-1863, 1873-2089, and 2097-2189; these read QKQA…QGQG, GQGH…GQVQ, VQGQ…PQHA, QHAQ…QPQQ, and SQPQ…APTK.

The protein belongs to the EAF1 family. Component of the NuA4 histone acetyltransferase complex.

The protein localises to the nucleus. In terms of biological role, component of the NuA4 histone acetyltransferase complex which is involved in transcriptional activation of selected genes principally by acetylation of nucleosomal histone H4 and H2A. The NuA4 complex is also involved in DNA repair. The sequence is that of Chromatin modification-related protein eaf-1 (eaf-1) from Neurospora crassa (strain ATCC 24698 / 74-OR23-1A / CBS 708.71 / DSM 1257 / FGSC 987).